The chain runs to 1255 residues: MRRGGWRKRAGEGDGWGGWGGYMSAKVKKLEDQFRSDSAIQHQRDGNSSSIFSGVAIYVNGFTDPSADELRRLMMLHGGQYHVYYSRSKTTHIIATNLPNAKIKELKGEKVVRPEWIVESIKAGRLLSHIPYQLYTKQSSVQKGLSFNSICKPEDAMPGPSNIAKDLNRVNHIKQCEMESEITPNGISSWNEEEEEDSDGLGFTKLDQILPERKQNGIQSHKDSTAIFNGHTHNTCISALKTQDCLVPSSNSVASRFSPGPVQEEGKPEKGIVDFRDCTMQQLQQSNKNTDFSWNPHRTMSNSSSSSSLHSNTKINGAHHSTVQGPSSTKSTSVPTPSKAASLSVSKPSDCSFISDFYSRSRLHHISTWKCELTEFVNSLQRKNSGVFPGREKLKKWKAGRSALKTDTGNVSVASSAKPQSCIMHVDMDCFFVSVAIRNRPDLKGKPVAVTSNRGAGKAPLRPGANPQLEWQYYQNKLLNGKAEIRIPDKLDSLVWEHSDSAHMNGVDCDLTVLSMAEIASCSYEARQAGIKNGMFFGQAKKLCPNLQAVSYDFNAYKEVAQTVYEILASYTHNIEAVSCDEALVDITEILTETRLTPDELANAIRDEIKAQTKCTASVGMGSNILLARMATRKAKPDGQYHLKPEEVDDFIRGQLVTNLPGVGRSMESKLASLGIRTCGDLQCASMSKLQKEFGPKTGQMLYRFCRGLDDRPVRTEKERKSVSAEINYGIRFTQPKEAEAFLLSLSEEIQRRLEAAGMKGKRLTLKIMVRKAGAPVEPAKYGGHGICDNIARTVTLDHATDSAKVIGKETLNMFHTMKLNISDMRGVGIQVQQLVPISKTTSAQSAVQSGRLPGGSHSVIDLLHVQKAKKCSEEEHKEVFVAAMDLEISSDSRTCTVLPSRGTHLTAGLNSNVSKTDSAVKLNGLHSPISVKSRLNLSIEVPSASQLDKSVLEALPPDLREQVEQIYTIQQGETYGDSKREPINGCNTALLSQPVGTVLLQVPELQEPNANMGINVIALPAFSQVDPEVFAALPAELQAELKDAYDQRQKQPEQQPANAFVSKNPCLQLKHATTKNKKKIRKKNPVSPVKKIQSPLKNKLLGSPAKNMPAASGSPQKLIDGFLKQEGAAAQLEAVPSTSDASDPSALQTEQCGSFRPQAPNLAGAVEFNDVKTLLKEWITTISDPMEEDILQVVKYCTDLIEEKDLEKLDLVVKYMKRLMQSSVESVWNMAFDFILDNVQVVLQQTYGSTLKVI.

The region spanning 47–134 is the BRCT domain; sequence NSSSIFSGVA…RLLSHIPYQL (88 aa). A compositionally biased stretch (polar residues) spans 287-300; it reads NKNTDFSWNPHRTM. The tract at residues 287–348 is disordered; that stretch reads NKNTDFSWNP…KAASLSVSKP (62 aa). Over residues 301 to 312 the composition is skewed to low complexity; it reads SNSSSSSSLHSN. Residues 313 to 325 are compositionally biased toward polar residues; that stretch reads TKINGAHHSTVQG. Positions 326–339 are enriched in low complexity; it reads PSSTKSTSVPTPSK. The segment at 357-367 is interaction with target DNA; the sequence is FYSRSRLHHIS. Residues Arg-362, 427 to 431, 521 to 527, Asn-533, and Asp-581 each bind dCTP; these read DMDCF and SCSYEAR. A UmuC domain is found at 423-664; it reads IMHVDMDCFF…QLVTNLPGVG (242 aa). Asp-427 contributes to the Mg(2+) binding site. Residues Asp-581 and Glu-582 each contribute to the Mg(2+) site. 2 interaction with target DNA regions span residues 664–667 and 720–728; these read GRSM and RKSVSAEIN. A compositionally biased stretch (basic residues) spans 1073–1085; the sequence is ATTKNKKKIRKKN. 2 disordered regions span residues 1073 to 1114 and 1134 to 1153; these read ATTK…AASG and EAVP…TEQC. A Nuclear localization signal motif is present at residues 1079 to 1085; the sequence is KKIRKKN. A compositionally biased stretch (polar residues) spans 1137 to 1153; the sequence is PSTSDASDPSALQTEQC. The segment at 1156–1255 is protein interaction domain; that stretch reads FRPQAPNLAG…QTYGSTLKVI (100 aa).

The protein belongs to the DNA polymerase type-Y family. As to quaternary structure, monomer.

It localises to the nucleus. In terms of biological role, deoxycytidyl transferase involved in DNA repair. Transfers a dCMP residue from dCTP to the 3'-end of a DNA primer in a template-dependent reaction. May assist in the first step in the bypass of abasic lesions by the insertion of a nucleotide opposite the lesion. Required for normal induction of mutations by physical and chemical agents. May play a role in homologous recombination and immunoglobulin gene conversion. The polypeptide is DNA repair protein REV1 (REV1) (Gallus gallus (Chicken)).